The primary structure comprises 204 residues: uncharacterized protein (204 aa).

This is an uncharacterized protein from Acinetobacter calcoaceticus.